Consider the following 279-residue polypeptide: Methylthioribulose-1-phosphate dehydratase (279 aa).

Position 132 (cysteine 132) interacts with substrate. Histidine 150 and histidine 152 together coordinate Zn(2+). Glutamate 175 (proton donor/acceptor) is an active-site residue. A Zn(2+)-binding site is contributed by histidine 240.

It belongs to the aldolase class II family. MtnB subfamily. The cofactor is Zn(2+).

The protein resides in the cytoplasm. It carries out the reaction 5-(methylsulfanyl)-D-ribulose 1-phosphate = 5-methylsulfanyl-2,3-dioxopentyl phosphate + H2O. Its pathway is amino-acid biosynthesis; L-methionine biosynthesis via salvage pathway; L-methionine from S-methyl-5-thio-alpha-D-ribose 1-phosphate: step 2/6. Functionally, catalyzes the dehydration of methylthioribulose-1-phosphate (MTRu-1-P) into 2,3-diketo-5-methylthiopentyl-1-phosphate (DK-MTP-1-P). The polypeptide is Methylthioribulose-1-phosphate dehydratase (Candida tropicalis (strain ATCC MYA-3404 / T1) (Yeast)).